The following is a 610-amino-acid chain: Protein Spindly-B (610 aa).

Positions 1-392 form a coiled coil; the sequence is MEESETVLKL…IDKVKDELSL (392 aa). The disordered stretch occupies residues 474-610; sequence TEAHGVSDAT…KPATAQCPQQ (137 aa). Basic and acidic residues-rich tracts occupy residues 493–511 and 535–548; these read SDDK…KDQD and RIME…DLNK. The span at 549–561 shows a compositional bias: polar residues; it reads RNPNNCTITSIHP. A compositionally biased stretch (basic and acidic residues) spans 570-583; the sequence is SELKKVDEEQEKRK.

Belongs to the Spindly family.

Its subcellular location is the chromosome. It localises to the centromere. The protein localises to the kinetochore. Its function is as follows. Required for the localization of dynein and dynactin to the mitotic kintochore. Dynein is believed to control the initial lateral interaction between the kinetochore and spindle microtubules and to facilitate the subsequent formation of end-on kinetochore-microtubule attachments mediated by the NDC80 complex. This Xenopus laevis (African clawed frog) protein is Protein Spindly-B (spdl1-b).